We begin with the raw amino-acid sequence, 682 residues long: Connectin (682 aa).

Residues 1–24 form the signal peptide; the sequence is MATLADSAICFLLLSLLLIGACLV. Residues 29-54 form a disordered region; it reads GRAKDDRRTRGRGSSSGVLSSSSSSS. Residues 40–54 show a composition bias toward low complexity; it reads RGSSSGVLSSSSSSS. LRR repeat units lie at residues 149–172, 173–196, 199–220, 223–244, 247–268, 271–292, 295–316, 319–342, 343–364, 367–388, and 389–404; these read LREL…IIEP, LKNL…AFAN, FLER…AFAN, RLRE…AFRN, LCER…LFAD, RLTF…IFRG, NLNV…VFAE, SLSE…DGLN, TLKT…LLRG, ALLS…TFQP, and IMDN…LVSD. The region spanning 405–462 is the LRRCT domain; that stretch reads NKFICDCRLQWIFELKNRTRHLQLRDSLEDLHCTLQEPKLSHFVDPVPPTILDVLNIG. The interval 503-536 is disordered; sequence RQALRGQRQFASSAENVVESKMRRRRKRQEEVKE. A lipid anchor (GPI-anchor amidated alanine) is attached at Ala658. Positions 659–682 are cleaved as a propeptide — removed in mature form; that stretch reads GANSLAQGMTIIVSLVALMMISRG.

Predominantly expressed in abdominal and thoracic segment muscle and motorneuron cells.

It localises to the cell membrane. In terms of biological role, cell adhesion protein involved in target recognition during neuromuscular development. Mediates homophilic cellular adhesion. The sequence is that of Connectin (Con) from Drosophila melanogaster (Fruit fly).